Consider the following 1358-residue polypeptide: Retrotransposon-like protein 1 (1358 aa).

2 disordered regions span residues 1–159 and 563–616; these read MIEP…TEHS and ADVF…TAPW. Positions 19–30 are enriched in low complexity; the sequence is SSKQMESSEGSS. Residues 65 to 79 show a composition bias toward acidic residues; the sequence is EMEELPTDLLQDMEE. Over residues 131–149 the composition is skewed to basic and acidic residues; it reads AREEQEAHTDLKESGREET. Acidic residues predominate over residues 583–592; it reads GSDDLSESEP. The next 2 helical transmembrane spans lie at 1083–1099 and 1126–1146; these read LLYW…LVLL and LILD…TQLL. Disordered stretches follow at residues 1250–1283 and 1338–1358; these read DGLQ…PRHL and QPRE…ANLD. A compositionally biased stretch (low complexity) spans 1267–1276; it reads APPSHTAATH. Basic and acidic residues predominate over residues 1338–1347; the sequence is QPREQARLEE. A compositionally biased stretch (acidic residues) spans 1348 to 1358; the sequence is LPDEDEDANLD.

Its subcellular location is the membrane. Plays an essential role in capillaries endothelial cells for the maintenance of feto-maternal interface and for development of the placenta. The protein is Retrotransposon-like protein 1 (RTL1) of Homo sapiens (Human).